The chain runs to 525 residues: GMP synthase [glutamine-hydrolyzing] (525 aa).

Residues Lys8–Asn207 form the Glutamine amidotransferase type-1 domain. Cys85 functions as the Nucleophile in the catalytic mechanism. Residues His181 and Glu183 contribute to the active site. The region spanning Trp208–Arg400 is the GMPS ATP-PPase domain. Ser235–Ser241 lines the ATP pocket.

As to quaternary structure, homodimer.

The enzyme catalyses XMP + L-glutamine + ATP + H2O = GMP + L-glutamate + AMP + diphosphate + 2 H(+). It participates in purine metabolism; GMP biosynthesis; GMP from XMP (L-Gln route): step 1/1. Its function is as follows. Catalyzes the synthesis of GMP from XMP. This chain is GMP synthase [glutamine-hydrolyzing], found in Shewanella putrefaciens (strain CN-32 / ATCC BAA-453).